An 887-amino-acid polypeptide reads, in one-letter code: Beta-galactosidase 9 (887 aa).

The first 30 residues, 1-30, serve as a signal peptide directing secretion; sequence MAESIRTFSLQWRILSLIIALLVYFPILSG. The N-linked (GlcNAc...) asparagine glycan is linked to N37. Catalysis depends on E194, which acts as the Proton donor. The active-site Nucleophile is the E263. N-linked (GlcNAc...) asparagine glycans are attached at residues N463, N485, N496, N527, and N785. The SUEL-type lectin domain maps to 791–877; it reads NSVAPEVHLH…KTLAVMSRCS (87 aa). N881 carries N-linked (GlcNAc...) asparagine glycosylation.

The protein belongs to the glycosyl hydrolase 35 family. Ubiquitous, with higher expression levels in siliques.

The protein resides in the secreted. The protein localises to the extracellular space. Its subcellular location is the apoplast. It catalyses the reaction Hydrolysis of terminal non-reducing beta-D-galactose residues in beta-D-galactosides.. This Arabidopsis thaliana (Mouse-ear cress) protein is Beta-galactosidase 9 (BGAL9).